A 182-amino-acid polypeptide reads, in one-letter code: Crossover junction endodeoxyribonuclease RuvC (182 aa).

Residues D7, E68, and D141 contribute to the active site. Mg(2+)-binding residues include D7, E68, and D141.

It belongs to the RuvC family. In terms of assembly, homodimer which binds Holliday junction (HJ) DNA. The HJ becomes 2-fold symmetrical on binding to RuvC with unstacked arms; it has a different conformation from HJ DNA in complex with RuvA. In the full resolvosome a probable DNA-RuvA(4)-RuvB(12)-RuvC(2) complex forms which resolves the HJ. It depends on Mg(2+) as a cofactor.

It is found in the cytoplasm. The enzyme catalyses Endonucleolytic cleavage at a junction such as a reciprocal single-stranded crossover between two homologous DNA duplexes (Holliday junction).. In terms of biological role, the RuvA-RuvB-RuvC complex processes Holliday junction (HJ) DNA during genetic recombination and DNA repair. Endonuclease that resolves HJ intermediates. Cleaves cruciform DNA by making single-stranded nicks across the HJ at symmetrical positions within the homologous arms, yielding a 5'-phosphate and a 3'-hydroxyl group; requires a central core of homology in the junction. The consensus cleavage sequence is 5'-(A/T)TT(C/G)-3'. Cleavage occurs on the 3'-side of the TT dinucleotide at the point of strand exchange. HJ branch migration catalyzed by RuvA-RuvB allows RuvC to scan DNA until it finds its consensus sequence, where it cleaves and resolves the cruciform DNA. The sequence is that of Crossover junction endodeoxyribonuclease RuvC from Thermobifida fusca (strain YX).